A 273-amino-acid chain; its full sequence is NADPH-dependent 7-cyano-7-deazaguanine reductase (273 aa).

Residue 81 to 83 (VES) participates in substrate binding. Residue 83 to 84 (SK) coordinates NADPH. Cys-179 functions as the Thioimide intermediate in the catalytic mechanism. Catalysis depends on Asp-186, which acts as the Proton donor. 218–219 (AE) contributes to the substrate binding site. Residue 247–248 (RG) participates in NADPH binding.

It belongs to the GTP cyclohydrolase I family. QueF type 2 subfamily. Homodimer.

The protein localises to the cytoplasm. The enzyme catalyses 7-aminomethyl-7-carbaguanine + 2 NADP(+) = 7-cyano-7-deazaguanine + 2 NADPH + 3 H(+). It functions in the pathway tRNA modification; tRNA-queuosine biosynthesis. Catalyzes the NADPH-dependent reduction of 7-cyano-7-deazaguanine (preQ0) to 7-aminomethyl-7-deazaguanine (preQ1). This chain is NADPH-dependent 7-cyano-7-deazaguanine reductase, found in Rickettsia prowazekii (strain Madrid E).